A 210-amino-acid polypeptide reads, in one-letter code: Putative Dihydrofolate reductase (210 aa).

Positions 4 to 184 (TLYCVVAVDT…IFYMFETYIK (181 aa)) constitute a DHFR domain.

The protein belongs to the dihydrofolate reductase family.

It carries out the reaction (6S)-5,6,7,8-tetrahydrofolate + NADP(+) = 7,8-dihydrofolate + NADPH + H(+). This Human herpesvirus 8 type P (isolate GK18) (HHV-8) protein is Putative Dihydrofolate reductase (ORF2).